We begin with the raw amino-acid sequence, 166 residues long: HTH-type transcriptional regulator PecS (166 aa).

The region spanning Pro25–Lys160 is the HTH marR-type domain.

It is found in the cytoplasm. The presence of PecM is required to ensure the full regulation of the pecS-pecM intergenic region by PecS. Negatively regulates the expression of genes encoding pectinase and cellulase, which play a major role in virulence, and the expression of the blue pigment indigoidine, which is implicated in pathogenicity and protection from oxidative stress. Represses the expression of genes involved in indigoidine biosynthesis by binding to indA and indC promoter regions. Also binds to promoter sites in the pecS-pecM intergenic region and negatively autoregulates its expression as well as that of pecM. The chain is HTH-type transcriptional regulator PecS from Dickeya dadantii (strain 3937) (Erwinia chrysanthemi (strain 3937)).